The primary structure comprises 145 residues: Polytheonamide B (145 aa).

A propeptide spanning residues 1–96 (MADSDNTPTS…DDDLDQAAGG (96 aa)) is cleaved from the precursor. Thr97 bears the 2-oxo-5,5-dimethylhexanoate mark. Ile99 bears the 3-methylisoleucine mark. Position 101 is a 3-methylvaline (Val101). A 3-methyl-D-valine modification is found at Val102. Val103 carries the post-translational modification 3-methylvaline. Residue Ala104 is modified to D-alanine (Ala). A 3-methylvaline modification is found at Val105. 3-methyl-D-valine is present on residues Val106 and Val110. Position 112 is an N4-methyl-D-asparagine (Asn112). A 3-hydroxyvaline (Thr) modification is found at Thr113. Position 117 is a 3-methylvaline (Val117). Residue Asn118 is modified to N4-methyl-D-asparagine. At Gln119 the chain carries (3S)-3-methylglutamine. A 3-hydroxy-D-valine modification is found at Val120. Asn124 is subject to N4-methyl-D-asparagine. At Asn126 the chain carries (3R)-N4-methyl-3-hydroxy-D-asparagine. Val127 is modified (3-methylvaline). Val128 is subject to 3-hydroxy-D-valine. Asn130 and Asn132 each carry N4-methyl-D-asparagine. A (3R)-N4-methyl-3-hydroxy-D-asparagine modification is found at Asn134. The residue at position 136 (Asn136) is an N4-methyl-D-asparagine. Residue Ser138 is modified to D-serine (Ser). D-asparagine is present on Asn140. Residue Met141 is modified to 3,3-dimethylmethionine. Residue Asn142 is modified to D-asparagine. D-threonine is present on Thr144.

Post-translationally, epimerization of most, and perhaps all, L- to D-amino acids is catalyzed by PoyD, when PoyA and PoyD are coexpressed in E.coli. N-methylations are catalyzed by PoyE, when PoyA and PoyE are coexpressed in E.coli. In terms of processing, to obtain 2-oxo-5,5-dimethylhexanoate, Thr-97 is firstly dehydrated by PoyF. The second step possibly corresponds to methylation by PoyB/C, and the third step may be a cleavage by PoyH/J.

Functionally, antimicrobial peptide active against Gram-positive bacteria (MIC=4-&gt;125 ug/ml). May act by forming transmembrane ion channels, since the peptide rapidly depolarizes the bacterial cytoplasmic membrane, simultaneously decreasing the membrane potential and intracellular potassium contents. In Bacterium symbiont subsp. Theonella swinhoei (strain pTSMAC1), this protein is Polytheonamide B.